Consider the following 455-residue polypeptide: UDP-glycosyltransferase 2 (455 aa).

This sequence belongs to the UDP-glycosyltransferase family.

It carries out the reaction exophillate + UDP-alpha-D-galactose = phaeomoniecin D + UDP + H(+). It functions in the pathway secondary metabolite biosynthesis. Catalyzes the second glycosylation step during phaeomoniecin D biosynthesis, the further O-galactosylation of exophillic acid (produced by the O-glycosyltransferase OGT1) to yield the 4-O-beta-D-galactoside phaeomoniecin D. The polypeptide is UDP-glycosyltransferase 2 (Phaeomoniella chlamydospora (Phaeoacremonium chlamydosporum)).